Consider the following 602-residue polypeptide: Aspartate--tRNA(Asp/Asn) ligase (602 aa).

An L-aspartate-binding site is contributed by E175. The interval 199–202 is aspartate; that stretch reads QIFK. R221 is an L-aspartate binding site. ATP-binding positions include 221–223 and Q230; that span reads RDE. H458 serves as a coordination point for L-aspartate. Residue E492 coordinates ATP. L-aspartate is bound at residue R499. Position 544 to 547 (544 to 547) interacts with ATP; it reads GLDR.

This sequence belongs to the class-II aminoacyl-tRNA synthetase family. Type 1 subfamily. Homodimer.

It is found in the cytoplasm. The catalysed reaction is tRNA(Asx) + L-aspartate + ATP = L-aspartyl-tRNA(Asx) + AMP + diphosphate. Aspartyl-tRNA synthetase with relaxed tRNA specificity since it is able to aspartylate not only its cognate tRNA(Asp) but also tRNA(Asn). Reaction proceeds in two steps: L-aspartate is first activated by ATP to form Asp-AMP and then transferred to the acceptor end of tRNA(Asp/Asn). This is Aspartate--tRNA(Asp/Asn) ligase from Cupriavidus pinatubonensis (strain JMP 134 / LMG 1197) (Cupriavidus necator (strain JMP 134)).